A 130-amino-acid polypeptide reads, in one-letter code: Small ribosomal subunit protein uS9 (130 aa).

The tract at residues 99–130 (KSAGMLTRDPRMKERKKPGLKKARKASQFSKR) is disordered. A compositionally biased stretch (basic residues) spans 111–130 (KERKKPGLKKARKASQFSKR).

This sequence belongs to the universal ribosomal protein uS9 family.

The polypeptide is Small ribosomal subunit protein uS9 (Latilactobacillus sakei subsp. sakei (strain 23K) (Lactobacillus sakei subsp. sakei)).